The following is a 393-amino-acid chain: Protein FAM53C (393 aa).

Methionine 1 bears the N-acetylmethionine mark. The segment at 77 to 120 (HLRPPSRGNSPKEPPLSQVLSPEPPDPEKLPVPPAPPSKRHCRS) is disordered. Residues serine 122 and serine 162 each carry the phosphoserine modification. Disordered stretches follow at residues 141 to 167 (LWTP…PKRV) and 204 to 283 (QPCA…ARKT). Residues 204–215 (QPCATSPQSGSW) show a composition bias toward polar residues. Serine 232, serine 234, serine 255, serine 273, and serine 299 each carry phosphoserine. Positions 241 to 256 (ASRFLPSARSSPASSP) are enriched in low complexity. Residues 343-355 (SCSPVEGSSQVLS) are compositionally biased toward low complexity. Residues 343-365 (SCSPVEGSSQVLSESEEEEEGSV) are disordered.

Belongs to the FAM53 family.

The polypeptide is Protein FAM53C (Mus musculus (Mouse)).